The sequence spans 277 residues: Diaminopimelate epimerase (277 aa).

The substrate site is built by N13, Q46, and N66. The active-site Proton donor is the C75. Substrate-binding positions include 76 to 77, N160, N193, and 211 to 212; these read GN and ER. The active-site Proton acceptor is C220. 221–222 lines the substrate pocket; sequence GS.

This sequence belongs to the diaminopimelate epimerase family. As to quaternary structure, homodimer.

It localises to the cytoplasm. The enzyme catalyses (2S,6S)-2,6-diaminopimelate = meso-2,6-diaminopimelate. The protein operates within amino-acid biosynthesis; L-lysine biosynthesis via DAP pathway; DL-2,6-diaminopimelate from LL-2,6-diaminopimelate: step 1/1. Functionally, catalyzes the stereoinversion of LL-2,6-diaminopimelate (L,L-DAP) to meso-diaminopimelate (meso-DAP), a precursor of L-lysine and an essential component of the bacterial peptidoglycan. This Legionella pneumophila (strain Paris) protein is Diaminopimelate epimerase.